Reading from the N-terminus, the 39-residue chain is Photosystem II reaction center protein L (39 aa).

A helical transmembrane segment spans residues 18-38 (SLYLGLLLVFVLGILFSSYFF).

Belongs to the PsbL family. As to quaternary structure, PSII is composed of 1 copy each of membrane proteins PsbA, PsbB, PsbC, PsbD, PsbE, PsbF, PsbH, PsbI, PsbJ, PsbK, PsbL, PsbM, PsbT, PsbX, PsbY, Psb30/Ycf12, peripheral proteins PsbO, CyanoQ (PsbQ), PsbU, PsbV and a large number of cofactors. It forms dimeric complexes.

Its subcellular location is the cellular thylakoid membrane. Its function is as follows. One of the components of the core complex of photosystem II (PSII). PSII is a light-driven water:plastoquinone oxidoreductase that uses light energy to abstract electrons from H(2)O, generating O(2) and a proton gradient subsequently used for ATP formation. It consists of a core antenna complex that captures photons, and an electron transfer chain that converts photonic excitation into a charge separation. This subunit is found at the monomer-monomer interface and is required for correct PSII assembly and/or dimerization. The chain is Photosystem II reaction center protein L from Prochlorococcus marinus (strain SARG / CCMP1375 / SS120).